The primary structure comprises 5068 residues: Protein piccolo (5068 aa).

Positions 1-20 (MGNEASLEGEGLPEGLAAAA) are enriched in low complexity. 2 disordered regions span residues 1–143 (MGNE…DFKE) and 173–524 (FDLI…QAPA). Over residues 93 to 102 (PGKPPDPGRP) the composition is skewed to pro residues. 3 stretches are compositionally biased toward basic and acidic residues: residues 111-122 (RTTDTFRSEQKL), 133-143 (KESKSRTDFKE), and 185-199 (ETTK…DQGK). At Ser212 the chain carries Phosphoserine. Over residues 232–241 (PSKSVSSQQA) the composition is skewed to polar residues. Over residues 252–279 (AKPSQQSPAQTPAQQAKPVAQQPGPAKA) the composition is skewed to low complexity. Residues 319-334 (TSLQQPGPKSLAQTPG) show a composition bias toward polar residues. Composition is skewed to pro residues over residues 391 to 407 (PTKP…PQPQ) and 416 to 487 (PQQP…PQPQ). Residues 401-500 (PAKPQPQQPV…LGKPSAQQPS (100 aa)) form a 10 X 10 AA tandem approximate repeats of P-A-K-P-Q-P-Q-Q-P-X region. Residues 495 to 508 (SAQQPSKSISQTVT) show a composition bias toward polar residues. Residues 515–524 (PPTSAAQAPA) show a composition bias toward low complexity. Residues 532–556 (CPLCNTTELLLHTPEKANFNTCTEC) form a C4-type zinc finger. Disordered stretches follow at residues 594-867 (AAIP…TVTG), 883-1005 (LIST…TELN), 1057-1345 (LGDM…PSDL), and 1364-1803 (VGEK…SDPE). Positions 610-625 (QPATASKSPVPSQQAS) are enriched in polar residues. Positions 626 to 644 (PKKELPSKQDSPKAPESKK) are enriched in basic and acidic residues. The segment covering 709–738 (SPSSAAATSKPAILSSQVQAQAQVTTAPPL) has biased composition (low complexity). Basic and acidic residues predominate over residues 782 to 795 (ESKDPVQKKEEPKK). A compositionally biased stretch (low complexity) spans 809–830 (VPKGSPTPSGTRPTTGQATPQS). Phosphoserine is present on residues Ser844 and Ser856. Composition is skewed to polar residues over residues 856–865 (SQPTTPQETV) and 883–893 (LISTAGQQAPH). Thr860 bears the Phosphothreonine mark. A C4-type zinc finger spans residues 997 to 1020 (CPLCRTELNVGSQDPPNFNTCTEC). Residues 1073-1085 (SPVPAPAEPPPQK) show a composition bias toward pro residues. Over residues 1097–1116 (KETEVKAETEKQIPEKETPS) the composition is skewed to basic and acidic residues. Phosphothreonine is present on Thr1120. Basic and acidic residues-rich tracts occupy residues 1144-1165 (PEKK…KKPP), 1172-1186 (LEEK…KLPP), 1244-1253 (PKDRQKESRD), and 1262-1283 (TAKE…DKSD). Positions 1290 to 1306 (PKSPQGLSDTGYSSDGI) are enriched in polar residues. A phosphoserine mark is found at Ser1292, Ser1302, Ser1303, Ser1332, Ser1334, Ser1337, Ser1338, and Ser1341. Residues 1319–1333 (SDEKDLLKGLKKDSF) are compositionally biased toward basic and acidic residues. Residues 1334 to 1343 (SQESSPSSPS) are compositionally biased toward low complexity. The segment covering 1374 to 1392 (PQKVSPEQPQDQQKTQTPS) has biased composition (polar residues). Residues 1405-1444 (KESQEKKVTSKKDSAQGFPSRKEHKENPELVDDLSPRRAS) are compositionally biased toward basic and acidic residues. Ser1439, Ser1451, Ser1452, Ser1454, Ser1457, Ser1481, Ser1484, Ser1505, and Ser1507 each carry phosphoserine. Residues 1499–1511 (SADEDASGSEDEE) show a composition bias toward acidic residues. At Thr1552 the chain carries Phosphothreonine. A phosphoserine mark is found at Ser1553, Ser1563, and Ser1575. The segment covering 1566-1575 (DEDDETFDES) has biased composition (acidic residues). The span at 1576–1587 (PELKFRETKSQE) shows a compositional bias: basic and acidic residues. Over residues 1606-1624 (ELNSTVTDKYSAESSQKKT) the composition is skewed to polar residues. Positions 1628–1638 (FDEEPELEMES) are enriched in acidic residues. The residue at position 1638 (Ser1638) is a Phosphoserine. Thr1640 carries the phosphothreonine modification. Phosphoserine occurs at positions 1642 and 1647. The segment covering 1650-1667 (EGSSSLHASSFTPGTSPT) has biased composition (polar residues). The span at 1707-1720 (DSSEEEELREEEEL) shows a compositional bias: acidic residues. 2 positions are modified to phosphoserine: Ser1708 and Ser1709. A compositionally biased stretch (basic and acidic residues) spans 1721–1734 (LKEQEKQRELEQQQ). The residue at position 1760 (Thr1760) is a Phosphothreonine. Ser1766 carries the post-translational modification Phosphoserine. Residues 1775–1790 (EELRQAAEMEELHRSS) are compositionally biased toward basic and acidic residues. Phosphoserine is present on residues Ser1795, Ser1800, Ser1808, and Ser1829. Disordered regions lie at residues 2104–2126 (PSES…ISSV) and 2261–2377 (EAEL…AAAA). Low complexity predominate over residues 2109-2126 (TSVPPSDTPSLTSSISSV). A compositionally biased stretch (polar residues) spans 2277-2291 (TPSSQTKEQPGSPHS). Residues 2334–2368 (QPPPPPPPPPPPPPPPPPPPPPPLPPATSPKPPTY) show a composition bias toward pro residues. Ser2495 bears the Phosphoserine mark. An O-linked (GlcNAc) threonine glycan is attached at Thr2686. Ser2960 carries an O-linked (GlcNAc) serine glycan. Thr2998 carries the post-translational modification Phosphothreonine. 2 disordered regions span residues 3334-3443 (KEEK…SKVS) and 3490-3556 (KGGS…LYSP). A Phosphoserine modification is found at Ser3358. The span at 3361-3370 (DDPRNLKKIV) shows a compositional bias: basic and acidic residues. Ser3372 carries the phosphoserine modification. Phosphothreonine is present on residues Thr3376 and Thr3403. Positions 3403 to 3412 (TDDEDQDEWD) are enriched in acidic residues. Polar residues predominate over residues 3495–3507 (GCQTETDPDTQSP). Phosphoserine occurs at positions 3506, 3514, 3545, 3549, 3555, 3558, 3561, 3582, 3608, 3610, and 3616. 2 disordered regions span residues 3576 to 3679 (PLPD…RRRM) and 3760 to 3797 (DYMS…QFIP). 2 stretches are compositionally biased toward polar residues: residues 3636–3645 (KGSQTTSGTQ) and 3661–3673 (STGT…TMGT). Position 3763 is a phosphoserine (Ser3763). The segment covering 3773 to 3785 (SRVESQHGIERPR) has biased composition (basic and acidic residues). The segment covering 3787-3797 (APQTEFSQFIP) has biased composition (polar residues). A phosphoserine mark is found at Ser4016, Ser4042, and Ser4132. Disordered stretches follow at residues 4207–4231 (ADKP…GLDL) and 4254–4273 (VSFG…LPIS). A compositionally biased stretch (low complexity) spans 4210-4231 (PYSSGSRSRPSSRPSSVYGLDL). Residues 4257–4273 (GHSSSSARTKPTSLPIS) are compositionally biased toward polar residues. Ser4286, Ser4290, Ser4293, Ser4322, and Ser4358 each carry phosphoserine. A disordered region spans residues 4317 to 4339 (RDQFGSSHSLPEVQQHMREESRT). Residues 4424-4518 (RIKITRDSKD…EAEICVRLDL (95 aa)) form the PDZ domain. The tract at residues 4574–4620 (KGAHAHSGPTSAGSSSVPSPGQPGSPSVSKKKHGGSKPTDVSKTASH) is disordered. The segment covering 4578 to 4601 (AHSGPTSAGSSSVPSPGQPGSPSV) has biased composition (low complexity). Ser4592 is modified (phosphoserine). The 130-residue stretch at 4622-4751 (ITGEIQLQIN…SHLDNTPRWY (130 aa)) folds into the C2 1 domain. 2 residues coordinate Ca(2+): Asp4651 and Asp4657. A Phosphoserine modification is found at Ser4706. 4 residues coordinate Ca(2+): Asp4721, Asp4723, Ser4726, and Asp4729. Disordered stretches follow at residues 4758 to 4834 (ESIE…SVAQ) and 4857 to 4891 (QPTK…SEGS). Composition is skewed to low complexity over residues 4766-4778 (HSSQ…PKPS) and 4805-4815 (SSPGSSKSSSE). The span at 4823 to 4834 (PSRSQSKTSVAQ) shows a compositional bias: polar residues. The segment covering 4870–4891 (SVSTGSSGSSVGSGYSVDSEGS) has biased composition (low complexity). A C2 2 domain is found at 4933-5058 (VMGEIKLALK…DLRKRIVNWH (126 aa)).

As to quaternary structure, interacts with BSN, ERC2/CAST1, RIMS1 and UNC13A. Interacts (via C-terminus) with TRIO (via N-terminus). Interacts with CTBP1. Interacts with SIAH1; this interaction negatively regulates SIAH1 E3 ligase activity. Directly interacts with GIT1 and GIT2. Ca(2+) serves as cofactor. In terms of tissue distribution, highly expressed in brain. Moderately expressed in pituitary gland and pancreatic islets. Low levels found in stomach.

The protein localises to the presynaptic active zone. Scaffold protein of the presynaptic cytomatrix at the active zone (CAZ) which is the place in the synapse where neurotransmitter is released. After synthesis, participates in the formation of Golgi-derived membranous organelles termed Piccolo-Bassoon transport vesicles (PTVs) that are transported along axons to sites of nascent synaptic contacts. At the presynaptic active zone, regulates the spatial organization of synaptic vesicle cluster, the protein complexes that execute membrane fusion and compensatory endocytosis. Organizes as well the readily releasable pool of synaptic vesicles and safeguards a fraction of them to be not immediately available for action potential-induced release. Also functions in processes other than assembly such as the regulation of specific presynaptic protein ubiquitination by interacting with SIAH1 or the regulation of presynaptic autophagy. Also mediates synapse to nucleus communication leading to reconfiguration of gene expression by associating with the transcriptional corepressor CTBP1 and by subsequently reducing the size of its pool available for nuclear import. The chain is Protein piccolo from Mus musculus (Mouse).